Reading from the N-terminus, the 131-residue chain is Secreted RxLR effector protein 45 (131 aa).

Positions 1 to 16 (MSIFIFISLVLGLAHQ) are cleaved as a signal peptide. Positions 56–59 (RPLR) match the RxLR motif. Asparagine 128 carries N-linked (GlcNAc...) asparagine glycosylation.

Belongs to the RxLR effector family.

The protein resides in the secreted. It is found in the host nucleus. Secreted effector that completely suppresses the host cell death induced by cell death-inducing proteins. This Plasmopara viticola (Downy mildew of grapevine) protein is Secreted RxLR effector protein 45.